Here is a 1041-residue protein sequence, read N- to C-terminus: Isoleucine--tRNA ligase (1041 aa).

The short motif at P53–H63 is the 'HIGH' region element. The 'KMSKS' region signature appears at K619 to S623. K622 is an ATP binding site.

It belongs to the class-I aminoacyl-tRNA synthetase family. IleS type 2 subfamily. In terms of assembly, monomer. It depends on Zn(2+) as a cofactor.

It localises to the cytoplasm. It carries out the reaction tRNA(Ile) + L-isoleucine + ATP = L-isoleucyl-tRNA(Ile) + AMP + diphosphate. Catalyzes the attachment of isoleucine to tRNA(Ile). As IleRS can inadvertently accommodate and process structurally similar amino acids such as valine, to avoid such errors it has two additional distinct tRNA(Ile)-dependent editing activities. One activity is designated as 'pretransfer' editing and involves the hydrolysis of activated Val-AMP. The other activity is designated 'posttransfer' editing and involves deacylation of mischarged Val-tRNA(Ile). The chain is Isoleucine--tRNA ligase (ileS) from Mycobacterium tuberculosis (strain CDC 1551 / Oshkosh).